The following is a 274-amino-acid chain: Large ribosomal subunit protein uL2 (274 aa).

Disordered stretches follow at residues 28–55 and 224–274; these read APHA…RHVG and VAMN…RRRK.

It belongs to the universal ribosomal protein uL2 family. Part of the 50S ribosomal subunit. Forms a bridge to the 30S subunit in the 70S ribosome.

One of the primary rRNA binding proteins. Required for association of the 30S and 50S subunits to form the 70S ribosome, for tRNA binding and peptide bond formation. It has been suggested to have peptidyltransferase activity; this is somewhat controversial. Makes several contacts with the 16S rRNA in the 70S ribosome. The polypeptide is Large ribosomal subunit protein uL2 (Pseudomonas putida (strain GB-1)).